The sequence spans 58 residues: UPF0391 membrane protein OCAR_5266/OCA5_c27040 (58 aa).

The next 2 helical transmembrane spans lie at 4-24 (WVVTFLIIALVAGLLGFGGIA) and 30-50 (IAKIVFFIAIVLFAVSAVVGL).

This sequence belongs to the UPF0391 family.

It localises to the cell membrane. The protein is UPF0391 membrane protein OCAR_5266/OCA5_c27040 of Afipia carboxidovorans (strain ATCC 49405 / DSM 1227 / KCTC 32145 / OM5) (Oligotropha carboxidovorans).